The primary structure comprises 222 residues: Germin-like protein subfamily 1 member 4 (222 aa).

The signal sequence occupies residues Met1 to Cys24. Residues Cys34 and Cys50 are joined by a disulfide bond. N-linked (GlcNAc...) asparagine glycosylation occurs at Asn38. Residues Ser64 to Lys215 form the Cupin type-1 domain. Mn(2+)-binding residues include His112 and His114. Asn139 carries N-linked (GlcNAc...) asparagine glycosylation. His161 is a Mn(2+) binding site.

The protein belongs to the germin family. Oligomer (believed to be a pentamer but probably hexamer).

It localises to the secreted. The protein localises to the extracellular space. It is found in the apoplast. Functionally, may play a role in plant defense. Probably has no oxalate oxidase activity even if the active site is conserved. The polypeptide is Germin-like protein subfamily 1 member 4 (Arabidopsis thaliana (Mouse-ear cress)).